An 81-amino-acid polypeptide reads, in one-letter code: uncharacterized protein (81 aa).

Positions 1 to 16 (MNRLTFYGLCLSGAVG) are cleaved as a signal peptide. The segment at 55–81 (TIDPHHNHHDDHHDSHGHGHGKIKGHH) is disordered. Residues 57 to 71 (DPHHNHHDDHHDSHG) are compositionally biased toward basic and acidic residues. Positions 72 to 81 (HGHGKIKGHH) are enriched in basic residues.

It localises to the secreted. This is an uncharacterized protein from Dictyostelium discoideum (Social amoeba).